A 396-amino-acid polypeptide reads, in one-letter code: Ribose-phosphate pyrophosphokinase 1, chloroplastic (396 aa).

The N-terminal 36 residues, 1–36, are a transit peptide targeting the chloroplast; sequence MPLSYSAAAAAAPSPLAARSRGLLRRPPRSSPVVVR. Positions 204, 206, 215, and 219 each coordinate Mg(2+). The tract at residues 290-305 is binding of phosphoribosylpyrophosphate; the sequence is GKVAVMMDDMIDTAGT.

It belongs to the ribose-phosphate pyrophosphokinase family. Mg(2+) is required as a cofactor.

It localises to the plastid. The protein resides in the chloroplast. The enzyme catalyses D-ribose 5-phosphate + ATP = 5-phospho-alpha-D-ribose 1-diphosphate + AMP + H(+). This chain is Ribose-phosphate pyrophosphokinase 1, chloroplastic, found in Oryza sativa subsp. japonica (Rice).